The following is a 226-amino-acid chain: Uridylate kinase (226 aa).

6-10 lines the ATP pocket; that stretch reads KISGK. Residue glycine 43 coordinates UMP. ATP is bound by residues glycine 44 and arginine 48. UMP contacts are provided by residues aspartate 65 and 113–119; that span reads FQPGQST. The ATP site is built by threonine 139, asparagine 140, tyrosine 145, and aspartate 148.

Belongs to the UMP kinase family. In terms of assembly, homohexamer.

The protein resides in the cytoplasm. It carries out the reaction UMP + ATP = UDP + ADP. Its pathway is pyrimidine metabolism; CTP biosynthesis via de novo pathway; UDP from UMP (UMPK route): step 1/1. Its activity is regulated as follows. Inhibited by UTP. Catalyzes the reversible phosphorylation of UMP to UDP. The chain is Uridylate kinase from Saccharolobus islandicus (strain M.16.27) (Sulfolobus islandicus).